We begin with the raw amino-acid sequence, 227 residues long: Probable cytokinin riboside 5'-monophosphate phosphoribohydrolase LOGL9 (227 aa).

A compositionally biased stretch (polar residues) spans 1-15 (MYISSPHTSHFTSID). Residues 1–26 (MYISSPHTSHFTSIDRSPAVVSESDR) are disordered. Residues E117, 135 to 136 (RK), and 152 to 158 (GYGTLEE) contribute to the substrate site.

It belongs to the LOG family. In terms of tissue distribution, expressed in roots, leaves and stems.

It catalyses the reaction N(6)-(dimethylallyl)adenosine 5'-phosphate + H2O = N(6)-dimethylallyladenine + D-ribose 5-phosphate. The enzyme catalyses 9-ribosyl-trans-zeatin 5'-phosphate + H2O = trans-zeatin + D-ribose 5-phosphate. Functionally, cytokinin-activating enzyme working in the direct activation pathway. Phosphoribohydrolase that converts inactive cytokinin nucleotides to the biologically active free-base forms. This is Probable cytokinin riboside 5'-monophosphate phosphoribohydrolase LOGL9 (LOGL9) from Oryza sativa subsp. japonica (Rice).